The chain runs to 411 residues: Multidrug resistance protein MdtA (411 aa).

The first 26 residues, 1–26 (MNNNKKTKKRFSLIIILLIVIAGAIA), serve as a signal peptide directing secretion. Residues 35–55 (SAPPVSKDTPTANTPNRSTAG) show a composition bias toward polar residues. The interval 35–64 (SAPPVSKDTPTANTPNRSTAGSRRPPMPPV) is disordered.

It belongs to the membrane fusion protein (MFP) (TC 8.A.1) family. In terms of assembly, part of a tripartite efflux system composed of MdtA, MdtB and MdtC.

The protein resides in the cell inner membrane. The polypeptide is Multidrug resistance protein MdtA (Proteus mirabilis (strain HI4320)).